The following is a 457-amino-acid chain: Dihydrolipoyl dehydrogenase (457 aa).

FAD is bound by residues 32-40 (EKEYFGGVC), Lys-49, and Ala-113. Cys-40 and Cys-45 are joined by a disulfide. Residues 178-182 (GGGVI), Val-235, and 262-265 (SIGR) contribute to the NAD(+) site. Residues Asp-303 and Ala-311 each contribute to the FAD site. His-437 acts as the Proton acceptor in catalysis.

The protein belongs to the class-I pyridine nucleotide-disulfide oxidoreductase family. As to quaternary structure, homodimer. Requires FAD as cofactor.

The protein localises to the cytoplasm. It carries out the reaction N(6)-[(R)-dihydrolipoyl]-L-lysyl-[protein] + NAD(+) = N(6)-[(R)-lipoyl]-L-lysyl-[protein] + NADH + H(+). Functionally, lipoamide dehydrogenase is a component of the alpha-ketoacid dehydrogenase complexes. The polypeptide is Dihydrolipoyl dehydrogenase (pdhD) (Mycoplasma pneumoniae (strain ATCC 29342 / M129 / Subtype 1) (Mycoplasmoides pneumoniae)).